The sequence spans 251 residues: MTVTMRQMLEAGVHFGHQTRFWNPRMAPYIFGQRNKIHIVNLEKTMVKYNEAMNFVRKLAANRGTILFVSTKRQAREILAEEARRAGMPYVDERWLGGMLTNFKTVKQSIKRLKEVEAMIEDGSIERLSKREALTVTRELEKLQKSIGGIKDMGGLPDAIFIIDVGYHKIAVTEAQKLGIPVVGVVDTNHSPEGIDYIIPGNDDSSRAIRLYARGVADAVLEGRSQVLQEIVAAGGDEFVEVEEGSQEQQG.

It belongs to the universal ribosomal protein uS2 family.

In Azoarcus sp. (strain BH72), this protein is Small ribosomal subunit protein uS2.